The following is a 136-amino-acid chain: MTGGGKSGGKASGSKNAQSRSSKAGLAFPVGRVHRLLRKGNYAQRVGAGAPVYLAAVLEYLAAEILELAGNAARDNKKTRIIPRHLQLAIRNDEELNKLLGHVTIAQGGVLPNIHQNLLPKKTGKTAGGKNASQEM.

The span at 1–11 (MTGGGKSGGKA) shows a compositional bias: gly residues. The tract at residues 1 to 24 (MTGGGKSGGKASGSKNAQSRSSKA) is disordered. 2 positions are modified to N6-acetyllysine: Lys-6 and Lys-10. Gln-107 carries the post-translational modification N5-methylglutamine. Phosphoserine is present on Ser-133. The [ST]-Q motif motif lies at 133–134 (SQ).

It belongs to the histone H2A family. The nucleosome is a histone octamer containing two molecules each of H2A, H2B, H3 and H4 assembled in one H3-H4 heterotetramer and two H2A-H2B heterodimers. The octamer wraps approximately 147 bp of DNA. Phosphorylated to form H2AS128ph (gamma-H2A) in response to DNA double-strand breaks (DSBs) generated by exogenous genotoxic agents and by stalled replication forks. Phosphorylation is dependent on the DNA damage checkpoint kinases MEC1/ATR and TEL1/ATM, spreads on either side of a detected DSB site and may mark the surrounding chromatin for recruitment of proteins required for DNA damage signaling and repair. Gamma-H2A is removed from the DNA prior to the strand invasion-primer extension step of the repair process and subsequently dephosphorylated. Dephosphorylation is necessary for efficient recovery from the DNA damage checkpoint. In terms of processing, acetylated by ESA1 to form H2AK4ac and H2AK7ac.

The protein localises to the nucleus. It localises to the chromosome. Core component of nucleosome which plays a central role in DNA double strand break (DSB) repair. Nucleosomes wrap and compact DNA into chromatin, limiting DNA accessibility to the cellular machineries which require DNA as a template. Histones thereby play a central role in transcription regulation, DNA repair, DNA replication and chromosomal stability. DNA accessibility is regulated via a complex set of post-translational modifications of histones, also called histone code, and nucleosome remodeling. This is Histone H2A (HTA1) from Pyricularia oryzae (strain Y34) (Rice blast fungus).